A 240-amino-acid polypeptide reads, in one-letter code: Peptidyl-tRNA hydrolase 2 (240 aa).

Tyr-60 contacts tRNA. His-65 (proton acceptor) is an active-site residue. Tyr-111, Asn-113, and Asn-159 together coordinate tRNA.

It belongs to the PTH family. Monomer.

It localises to the cytoplasm. It carries out the reaction an N-acyl-L-alpha-aminoacyl-tRNA + H2O = an N-acyl-L-amino acid + a tRNA + H(+). Its function is as follows. Hydrolyzes ribosome-free peptidyl-tRNAs (with 1 or more amino acids incorporated), which drop off the ribosome during protein synthesis, or as a result of ribosome stalling. Functionally, catalyzes the release of premature peptidyl moieties from peptidyl-tRNA molecules trapped in stalled 50S ribosomal subunits, and thus maintains levels of free tRNAs and 50S ribosomes. In Corynebacterium jeikeium (strain K411), this protein is Peptidyl-tRNA hydrolase 2.